We begin with the raw amino-acid sequence, 235 residues long: Adenosine 5'-phosphosulfate reductase (235 aa).

[4Fe-4S] cluster contacts are provided by Cys-121, Cys-122, Cys-204, and Cys-207. Residue Cys-230 is the Nucleophile; cysteine thiosulfonate intermediate of the active site.

It belongs to the PAPS reductase family. CysH subfamily. [4Fe-4S] cluster is required as a cofactor.

Its subcellular location is the cytoplasm. The enzyme catalyses [thioredoxin]-disulfide + sulfite + AMP + 2 H(+) = adenosine 5'-phosphosulfate + [thioredoxin]-dithiol. The protein operates within sulfur metabolism; hydrogen sulfide biosynthesis; sulfite from sulfate. Functionally, catalyzes the formation of sulfite from adenosine 5'-phosphosulfate (APS) using thioredoxin as an electron donor. The polypeptide is Adenosine 5'-phosphosulfate reductase (Anoxybacillus flavithermus (strain DSM 21510 / WK1)).